The primary structure comprises 257 residues: Imidazole glycerol phosphate synthase subunit HisF (257 aa).

Catalysis depends on residues Asp-11 and Asp-130.

It belongs to the HisA/HisF family. As to quaternary structure, heterodimer of HisH and HisF.

It is found in the cytoplasm. It carries out the reaction 5-[(5-phospho-1-deoxy-D-ribulos-1-ylimino)methylamino]-1-(5-phospho-beta-D-ribosyl)imidazole-4-carboxamide + L-glutamine = D-erythro-1-(imidazol-4-yl)glycerol 3-phosphate + 5-amino-1-(5-phospho-beta-D-ribosyl)imidazole-4-carboxamide + L-glutamate + H(+). It functions in the pathway amino-acid biosynthesis; L-histidine biosynthesis; L-histidine from 5-phospho-alpha-D-ribose 1-diphosphate: step 5/9. Its function is as follows. IGPS catalyzes the conversion of PRFAR and glutamine to IGP, AICAR and glutamate. The HisF subunit catalyzes the cyclization activity that produces IGP and AICAR from PRFAR using the ammonia provided by the HisH subunit. This is Imidazole glycerol phosphate synthase subunit HisF from Afipia carboxidovorans (strain ATCC 49405 / DSM 1227 / KCTC 32145 / OM5) (Oligotropha carboxidovorans).